A 354-amino-acid chain; its full sequence is Ferrochelatase (354 aa).

The Fe cation site is built by His204 and Glu306.

This sequence belongs to the ferrochelatase family.

It is found in the cytoplasm. The catalysed reaction is heme b + 2 H(+) = protoporphyrin IX + Fe(2+). Its pathway is porphyrin-containing compound metabolism; protoheme biosynthesis; protoheme from protoporphyrin-IX: step 1/1. Catalyzes the ferrous insertion into protoporphyrin IX. This chain is Ferrochelatase, found in Coxiella burnetii (strain Dugway 5J108-111).